A 444-amino-acid chain; its full sequence is Methylenetetrahydrofolate--tRNA-(uracil-5-)-methyltransferase TrmFO (444 aa).

G10–G15 is a binding site for FAD.

The protein belongs to the MnmG family. TrmFO subfamily. FAD serves as cofactor.

Its subcellular location is the cytoplasm. It carries out the reaction uridine(54) in tRNA + (6R)-5,10-methylene-5,6,7,8-tetrahydrofolate + NADH + H(+) = 5-methyluridine(54) in tRNA + (6S)-5,6,7,8-tetrahydrofolate + NAD(+). The enzyme catalyses uridine(54) in tRNA + (6R)-5,10-methylene-5,6,7,8-tetrahydrofolate + NADPH + H(+) = 5-methyluridine(54) in tRNA + (6S)-5,6,7,8-tetrahydrofolate + NADP(+). Its function is as follows. Catalyzes the folate-dependent formation of 5-methyl-uridine at position 54 (M-5-U54) in all tRNAs. This is Methylenetetrahydrofolate--tRNA-(uracil-5-)-methyltransferase TrmFO from Streptococcus mutans serotype c (strain ATCC 700610 / UA159).